The sequence spans 478 residues: GTPase Obg (478 aa).

An Obg domain is found at 2–159; that stretch reads TTFVDRVELH…RDIVLELKTV (158 aa). Residues 61–87 are disordered; that stretch reads HHSPHRKATNGQPGAGDNRSGKDGQDL. An OBG-type G domain is found at 160-330; that stretch reads ADVALVGYPS…LSFALAGIIA (171 aa). GTP contacts are provided by residues 166–173, 191–195, 212–215, 282–285, and 311–313; these read GYPSAGKS, FTTLV, DVPG, NKVD, and SAI. 2 residues coordinate Mg(2+): S173 and T193. The OCT domain occupies 348 to 430; it reads PRAVDDAGFT…ENAVVFDWEP (83 aa). A disordered region spans residues 436-478; that stretch reads AEMLGRRGEDHRLEEPRPAAQRRRERDAERDDAEKEYDEFDPF. The span at 439–468 shows a compositional bias: basic and acidic residues; sequence LGRRGEDHRLEEPRPAAQRRRERDAERDDA. Over residues 469–478 the composition is skewed to acidic residues; the sequence is EKEYDEFDPF.

This sequence belongs to the TRAFAC class OBG-HflX-like GTPase superfamily. OBG GTPase family. Monomer. Requires Mg(2+) as cofactor.

The protein localises to the cytoplasm. In terms of biological role, an essential GTPase which binds GTP, GDP and possibly (p)ppGpp with moderate affinity, with high nucleotide exchange rates and a fairly low GTP hydrolysis rate. Plays a role in control of the cell cycle, stress response, ribosome biogenesis and in those bacteria that undergo differentiation, in morphogenesis control. This Streptomyces griseus subsp. griseus (strain JCM 4626 / CBS 651.72 / NBRC 13350 / KCC S-0626 / ISP 5235) protein is GTPase Obg.